The following is a 690-amino-acid chain: DNA topoisomerase 1 (690 aa).

The region spanning D3–A121 is the Toprim domain. The Mg(2+) site is built by E9 and D82. The 430-residue stretch at N129–L558 folds into the Topo IA-type catalytic domain. An interaction with DNA region spans residues S163 to Q168. The active-site O-(5'-phospho-DNA)-tyrosine intermediate is the Y298. Positions N329–R354 are disordered. Residues K339–R354 show a composition bias toward basic and acidic residues. 3 C4-type zinc fingers span residues C579–C605, C619–C647, and C660–C683.

Belongs to the type IA topoisomerase family. Monomer. The cofactor is Mg(2+).

It carries out the reaction ATP-independent breakage of single-stranded DNA, followed by passage and rejoining.. In terms of biological role, releases the supercoiling and torsional tension of DNA, which is introduced during the DNA replication and transcription, by transiently cleaving and rejoining one strand of the DNA duplex. Introduces a single-strand break via transesterification at a target site in duplex DNA. The scissile phosphodiester is attacked by the catalytic tyrosine of the enzyme, resulting in the formation of a DNA-(5'-phosphotyrosyl)-enzyme intermediate and the expulsion of a 3'-OH DNA strand. The free DNA strand then undergoes passage around the unbroken strand, thus removing DNA supercoils. Finally, in the religation step, the DNA 3'-OH attacks the covalent intermediate to expel the active-site tyrosine and restore the DNA phosphodiester backbone. The protein is DNA topoisomerase 1 of Halalkalibacterium halodurans (strain ATCC BAA-125 / DSM 18197 / FERM 7344 / JCM 9153 / C-125) (Bacillus halodurans).